We begin with the raw amino-acid sequence, 92 residues long: Protein S100-B (92 aa).

Blocked amino end (Ser); alternate is present on serine 2. Serine 2 carries the N-acetylserine; alternate modification. EF-hand domains are found at residues 13–48 (DVFHQYSGREGDKHKLKKSELKELINNELSHFLEEI) and 49–84 (KEQEVVDKVMETLDNDGDGECDFQEFMAFVAMVTTA). Histidine 16 lines the Zn(2+) pocket. 3 residues coordinate Ca(2+): serine 19, glutamate 22, and aspartate 24. Residue histidine 26 coordinates Zn(2+). Residues lysine 27, glutamate 32, aspartate 62, aspartate 64, aspartate 66, glutamate 68, and glutamate 73 each coordinate Ca(2+). 2 residues coordinate Zn(2+): histidine 86 and histidine 91.

The protein belongs to the S-100 family. Dimer of either two alpha chains, or two beta chains, or one alpha and one beta chain. The S100B dimer binds two molecules of STK38. Interacts with CACYBP in a calcium-dependent manner. Interacts with ATAD3A; this interaction probably occurs in the cytosol prior to ATAD3A mitochondrial targeting. Interacts with S100A6. The S100B dimer interacts with two molecules of CAPZA1. Interacts with AGER. Interacts with PPP5C (via TPR repeats); the interaction is calcium-dependent and modulates PPP5C activity. Interacts with TPPP; this interaction inhibits TPPP dimerization. Interacts with isoform CLSTN3beta of CLSTN3; interaction promotes secretion. In terms of tissue distribution, although predominant among the water-soluble brain proteins, S100 is also found in a variety of other tissues.

It is found in the cytoplasm. Its subcellular location is the nucleus. The protein localises to the secreted. Small zinc- and- and calcium-binding protein that is highly expressed in astrocytes and constitutes one of the most abundant soluble proteins in brain. Weakly binds calcium but binds zinc very tightly-distinct binding sites with different affinities exist for both ions on each monomer. Physiological concentrations of potassium ion antagonize the binding of both divalent cations, especially affecting high-affinity calcium-binding sites. Acts as a neurotrophic factor that promotes astrocytosis and axonal proliferation. Involved in innervation of thermogenic adipose tissue by acting as an adipocyte-derived neurotrophic factor that promotes sympathetic innervation of adipose tissue. Binds to and initiates the activation of STK38 by releasing autoinhibitory intramolecular interactions within the kinase. Interaction with AGER after myocardial infarction may play a role in myocyte apoptosis by activating ERK1/2 and p53/TP53 signaling. Could assist ATAD3A cytoplasmic processing, preventing aggregation and favoring mitochondrial localization. May mediate calcium-dependent regulation on many physiological processes by interacting with other proteins, such as TPR-containing proteins, and modulating their activity. In Homo sapiens (Human), this protein is Protein S100-B.